A 1305-amino-acid chain; its full sequence is RNA-directed RNA polymerase (1305 aa).

Residues 563–814 (IIVGDLEATG…KTLIAPFSVE (252 aa)) form the RdRp catalytic domain.

Belongs to the reoviridae RNA-directed RNA polymerase family.

It catalyses the reaction RNA(n) + a ribonucleoside 5'-triphosphate = RNA(n+1) + diphosphate. This chain is RNA-directed RNA polymerase (Segment-1), found in African horse sickness virus (AHSV).